Here is a 329-residue protein sequence, read N- to C-terminus: Ketol-acid reductoisomerase (NADP(+)) (329 aa).

A KARI N-terminal Rossmann domain is found at 1-181; that stretch reads MKVYYENDAD…GATRSGVLQT (181 aa). Residues 24–27, Arg47, and 82–85 contribute to the NADP(+) site; these read YGSQ and DQVQ. His107 is an active-site residue. Gly133 contributes to the NADP(+) binding site. The region spanning 182-327 is the KARI C-terminal knotted domain; it reads TFREETETDL…GELRKMMSWL (146 aa). Positions 190, 194, 226, and 230 each coordinate Mg(2+). Residue Ser251 coordinates substrate.

It belongs to the ketol-acid reductoisomerase family. The cofactor is Mg(2+).

The enzyme catalyses (2R)-2,3-dihydroxy-3-methylbutanoate + NADP(+) = (2S)-2-acetolactate + NADPH + H(+). The catalysed reaction is (2R,3R)-2,3-dihydroxy-3-methylpentanoate + NADP(+) = (S)-2-ethyl-2-hydroxy-3-oxobutanoate + NADPH + H(+). The protein operates within amino-acid biosynthesis; L-isoleucine biosynthesis; L-isoleucine from 2-oxobutanoate: step 2/4. Its pathway is amino-acid biosynthesis; L-valine biosynthesis; L-valine from pyruvate: step 2/4. Functionally, involved in the biosynthesis of branched-chain amino acids (BCAA). Catalyzes an alkyl-migration followed by a ketol-acid reduction of (S)-2-acetolactate (S2AL) to yield (R)-2,3-dihydroxy-isovalerate. In the isomerase reaction, S2AL is rearranged via a Mg-dependent methyl migration to produce 3-hydroxy-3-methyl-2-ketobutyrate (HMKB). In the reductase reaction, this 2-ketoacid undergoes a metal-dependent reduction by NADPH to yield (R)-2,3-dihydroxy-isovalerate. The sequence is that of Ketol-acid reductoisomerase (NADP(+)) from Maridesulfovibrio salexigens (strain ATCC 14822 / DSM 2638 / NCIMB 8403 / VKM B-1763) (Desulfovibrio salexigens).